Reading from the N-terminus, the 291-residue chain is Glycine--tRNA ligase alpha subunit (291 aa).

Belongs to the class-II aminoacyl-tRNA synthetase family. Tetramer of two alpha and two beta subunits.

It localises to the cytoplasm. It catalyses the reaction tRNA(Gly) + glycine + ATP = glycyl-tRNA(Gly) + AMP + diphosphate. The protein is Glycine--tRNA ligase alpha subunit of Microcystis aeruginosa (strain NIES-843 / IAM M-2473).